The primary structure comprises 285 residues: NAD kinase (285 aa).

Residue D68 is the Proton acceptor of the active site. Residues 68 to 69, 142 to 143, R153, K170, D172, and Q242 each bind NAD(+); these read DG and ND.

It belongs to the NAD kinase family. A divalent metal cation serves as cofactor.

It is found in the cytoplasm. The catalysed reaction is NAD(+) + ATP = ADP + NADP(+) + H(+). In terms of biological role, involved in the regulation of the intracellular balance of NAD and NADP, and is a key enzyme in the biosynthesis of NADP. Catalyzes specifically the phosphorylation on 2'-hydroxyl of the adenosine moiety of NAD to yield NADP. The protein is NAD kinase of Koribacter versatilis (strain Ellin345).